Reading from the N-terminus, the 102-residue chain is Large ribosomal subunit protein bL21 (102 aa).

Belongs to the bacterial ribosomal protein bL21 family. In terms of assembly, part of the 50S ribosomal subunit. Contacts protein L20.

In terms of biological role, this protein binds to 23S rRNA in the presence of protein L20. The protein is Large ribosomal subunit protein bL21 of Geobacter sp. (strain M21).